A 1152-amino-acid polypeptide reads, in one-letter code: MLVLNNFERIKIGLASPDQIRAWSHGEVKKPETINYRTLKPERDGLFCERIFGPTKDWECHCGKYKRVRYKGVVCDRCGVEVTRSKVRRERLGHIELAAPVSHIWYFKGIPSRMGLLLDMSPRSLEKVLYFVSYIVIDPGETPLLKKQLLTETEYREAREKYGNAFKAGMGAEAIKELLAEIDLDELSAELKAEIKESTGQRRIRALRRLEVVESFRKSGNRPEWMILDVIPVIPPELRPMVQLDGGRFATSDLNDLYRRVINRNNRLKRLLELGAPDIIVRNEKRMLQEAVDALIDNGRRGRPVTGPGNRPLKSLSDMLKGKQGRFRQNLLGKRVDYSGRSVIVVGPELKLHQCGLPKEMALELFKPFVMKKLVADGIAHNIKSAKRMVERVKPEVWDVLEEVIKEHPVLLNRAPTLHRLGIQAFEPVLVEGRAIQIHPLVCTAYNADFDGDQMAVHVPLSAEAQAEARLLMLSSHNILNPKDGKPVVVPTQDMVIGSYYLTVEKPGAKGEGKKFAHPEEVIMAYEEGVIELHTKIKVRYPIRGEIVELETTPGRIIFNEVIPEELRFINHLVDKKALGKIVTESYRKLGYEKTGYLLDGLKKLGFHYATKAGLTIGIVDITVPKEKQEILEEADRMVADIEVKYRRGLITEDERYQRVVDIWNAATEKVTKKLVETLEASQFNHVYMMAKSGARGNIQQIRQLAGMRGLMADPSGRIIDLPIKANFREGLTVLEYFISTHGARKGLADTALRTADSGYLTRRLVDVCQDVIVREEDCGTEDGIYVTDVKDGTDVIEKLEDRILGRVAAEDVVHPETGELLVAKNQEITEEIAEKIVSANIKKVKIRSVLTCRTRHGVCTRCYGRNLATNSIVDIGEAVGIIAAQSIGEPGTQLTMRTFHTGGVAGEDITQGLPRVEELFEARRPKGQAIITEIDGVVEVRDNKGRREIEVINQETGERKVYPITYQARIKVQTGDKVYAGDELTEGPINPHDLIKVKGIEGAQLYLLQEVQKVYRMQGVEINDKHIEVVIRQMLRKVKIEDSGDTDLLPGSLVDIFEFEDENAKVIAKGGKPATAKRVLLGITKASLATDSFLSAASFQETTRVLTEAAIKGKVDPLLGLKENVIIGKLIPAGTGMARYRNIMVQAKNEE.

Zn(2+) contacts are provided by cysteine 60, cysteine 62, cysteine 75, and cysteine 78. Positions 449, 451, and 453 each coordinate Mg(2+). Residues cysteine 779, cysteine 853, cysteine 860, and cysteine 863 each contribute to the Zn(2+) site.

The protein belongs to the RNA polymerase beta' chain family. In terms of assembly, the RNAP catalytic core consists of 2 alpha, 1 beta, 1 beta' and 1 omega subunit. When a sigma factor is associated with the core the holoenzyme is formed, which can initiate transcription. Requires Mg(2+) as cofactor. Zn(2+) is required as a cofactor.

The enzyme catalyses RNA(n) + a ribonucleoside 5'-triphosphate = RNA(n+1) + diphosphate. Functionally, DNA-dependent RNA polymerase catalyzes the transcription of DNA into RNA using the four ribonucleoside triphosphates as substrates. This Carboxydothermus hydrogenoformans (strain ATCC BAA-161 / DSM 6008 / Z-2901) protein is DNA-directed RNA polymerase subunit beta'.